The primary structure comprises 211 residues: Transcription antitermination protein NusB (211 aa).

The tract at residues 152–211 (PAKKERVANPFPSTPPKKPENVPNPFSTPFKKNSSEPIRNPFEGNKSPQPPQKTLRRKKK) is disordered. Over residues 175-188 (NPFSTPFKKNSSEP) the composition is skewed to polar residues.

This sequence belongs to the NusB family.

In terms of biological role, involved in transcription antitermination. Required for transcription of ribosomal RNA (rRNA) genes. Binds specifically to the boxA antiterminator sequence of the ribosomal RNA (rrn) operons. The protein is Transcription antitermination protein NusB of Chloroherpeton thalassium (strain ATCC 35110 / GB-78).